Here is an 89-residue protein sequence, read N- to C-terminus: Putative antitoxin VapB42 (89 aa).

Its function is as follows. Possibly the antitoxin component of a type II toxin-antitoxin (TA) system. Its cognate toxin is VapC42 (Potential). In Mycobacterium tuberculosis (strain CDC 1551 / Oshkosh), this protein is Putative antitoxin VapB42 (vapB42).